We begin with the raw amino-acid sequence, 210 residues long: Large ribosomal subunit protein uL3 (210 aa).

The interval 134 to 153 (THGNSLSHRAPGSIGQNQTP) is disordered. Glutamine 151 bears the N5-methylglutamine mark.

The protein belongs to the universal ribosomal protein uL3 family. As to quaternary structure, part of the 50S ribosomal subunit. Forms a cluster with proteins L14 and L19. Post-translationally, methylated by PrmB.

Its function is as follows. One of the primary rRNA binding proteins, it binds directly near the 3'-end of the 23S rRNA, where it nucleates assembly of the 50S subunit. In Aeromonas salmonicida (strain A449), this protein is Large ribosomal subunit protein uL3.